A 216-amino-acid chain; its full sequence is Probable nicotinate-nucleotide adenylyltransferase (216 aa).

This sequence belongs to the NadD family.

It carries out the reaction nicotinate beta-D-ribonucleotide + ATP + H(+) = deamido-NAD(+) + diphosphate. It participates in cofactor biosynthesis; NAD(+) biosynthesis; deamido-NAD(+) from nicotinate D-ribonucleotide: step 1/1. Its function is as follows. Catalyzes the reversible adenylation of nicotinate mononucleotide (NaMN) to nicotinic acid adenine dinucleotide (NaAD). This chain is Probable nicotinate-nucleotide adenylyltransferase, found in Shewanella baltica (strain OS223).